We begin with the raw amino-acid sequence, 309 residues long: MTFPAFLSPDPTWDGDSTGGPLLLTVRFSASIPDFPLDIENPDITTAAGLKQLIRTHLPPNLSSHRLRLIYAGRGLEDATPLSVSLKLPPSPSRTPVVQEDATTVKGKGKAPIREQPRLYIHCSIGDIVLSDADLAAEAAIATTLQQEQADEGYTGRKKQQQPPPSTTSAPRGFDRLLSAGFTPSEVSALRSQFMAIQSVSRTPDTMPTGAELRELEDRWMDEGSSAMAAGVPGGGEGISFADDDGGFGAGSRGAMDDMLWGAVMGFFWPVGCAMWLRREEGVWSWRKGLAVFVGVVINVAFGAMRIMN.

N-linked (GlcNAc...) asparagine glycosylation is present at N61. Disordered regions lie at residues 88 to 110 (LPPS…GKGK) and 148 to 177 (EQAD…FDRL). A run of 2 helical transmembrane segments spans residues 257-277 (DDML…AMWL) and 289-309 (GLAV…RIMN).

Belongs to the dsc3 family. Component of the DSC E3 ubiquitin ligase complex composed of dscA, dscB, dscC and dscD.

It localises to the endoplasmic reticulum membrane. It participates in protein modification; protein ubiquitination. Its function is as follows. Component of the DSC E3 ubiquitin ligase complex which is required for the srbA transcriptional activator proteolytic cleavage to release the soluble transcription factor from the membrane in low oxygen or sterol conditions. Required for growth during hypoxia and triazole drug susceptibility, as well as for virulence in a murine model of invasive pulmonary aspergillosis (IPA). The sequence is that of DSC E3 ubiquitin ligase complex subunit C from Aspergillus fumigatus (strain CBS 144.89 / FGSC A1163 / CEA10) (Neosartorya fumigata).